Consider the following 593-residue polypeptide: UvrABC system protein C (593 aa).

The region spanning 17–94 (MEPGCYLMKD…IKQYQPRYNI (78 aa)) is the GIY-YIG domain. A UVR domain is found at 199–234 (KTILKSLEERMLTASESLDFERAKEYRDLIQHIQNL).

The protein belongs to the UvrC family. Interacts with UvrB in an incision complex.

It localises to the cytoplasm. The UvrABC repair system catalyzes the recognition and processing of DNA lesions. UvrC both incises the 5' and 3' sides of the lesion. The N-terminal half is responsible for the 3' incision and the C-terminal half is responsible for the 5' incision. The sequence is that of UvrABC system protein C from Staphylococcus aureus (strain USA300).